The following is a 106-amino-acid chain: CLAVATA3/ESR (CLE)-related protein 21 (106 aa).

An N-terminal signal peptide occupies residues 1–31 (MLILSSRYAMKRDVLIIVIFTVLVLIIISRS). N-linked (GlcNAc...) asparagine glycosylation occurs at Asn47. Over residues 72–82 (KVRRRSSRFRR) the composition is skewed to basic residues. Residues 72–106 (KVRRRSSRFRRKTDGDEEEEEKRSIPTGPNPLHNK) form a disordered region. A hydroxyproline mark is found at Pro97 and Pro100. A glycan (O-linked (Ara...) hydroxyproline) is linked at Pro100.

It belongs to the CLV3/ESR signal peptide family. In terms of processing, the O-glycosylation (arabinosylation) of the hydroxyproline Pro-100 enhances binding affinity of the CLE21p peptide for its receptor. As to expression, mostly expressed in leaves and apex, and, to a lower extent, in seedlings, flowers, stems and siliques.

Its subcellular location is the secreted. The protein resides in the extracellular space. Extracellular signal peptide that regulates cell fate. Represses root apical meristem maintenance. Regulates the transition of protophloem cells from proliferation to differentiation, thus impinging on postembryonic growth capacity of the root meristem; this signaling pathway requires CRN and CLV2. In Arabidopsis thaliana (Mouse-ear cress), this protein is CLAVATA3/ESR (CLE)-related protein 21.